The primary structure comprises 902 residues: Calcium-activated chloride channel regulator 3A-1 (902 aa).

Residues 1–21 (MVPGLQVLLFLTLHLLQNTES) form the signal peptide. The segment at 45-199 (DERLIPSIKE…RITGTNVVHN (155 aa)) is metalloprotease domain. A glycan (N-linked (GlcNAc...) asparagine) is linked at N75. Position 155 (H155) interacts with Zn(2+). E156 is an active-site residue. 2 residues coordinate Zn(2+): H159 and D166. The VWFA domain occupies 308 to 476 (VVCLVLDKSG…NSLIDAFSRI (169 aa)). 7 N-linked (GlcNAc...) asparagine glycosylation sites follow: N504, N515, N630, N687, N697, N809, and N814.

It belongs to the CLCR family. As to quaternary structure, part of a complex composed of complement component C3, CLCA1/CLCA3, A2ML1/OH and ALB/serum albumin. Glycosylated. In terms of processing, the 130-kDa product is autoproteolytically processed by the metalloprotease domain and yields two subunits, a 90-kDa protein and a group of 32- to 38-kDa proteins. The cleavage is necessary for calcium-activated chloride channel (CaCC) activation activity. Highly expressed in skin and spleen, and at lower levels in kidney and liver. Also detected in lung and brain. Not detected in lung or brain. In lung, localizes to respiratory epithelia of the bronchi and trachea and the submucosal glands.

The protein localises to the cell membrane. Functionally, plays a role in modulating chloride current across the plasma membrane in a calcium-dependent manner. This is Calcium-activated chloride channel regulator 3A-1 from Mus musculus (Mouse).